We begin with the raw amino-acid sequence, 275 residues long: Diaminopimelate epimerase (275 aa).

3 residues coordinate substrate: asparagine 12, glutamine 45, and asparagine 65. The active-site Proton donor is the cysteine 74. Substrate is bound by residues 75–76 (GN), asparagine 158, asparagine 191, and 209–210 (ER). Cysteine 218 (proton acceptor) is an active-site residue. 219-220 (GT) is a binding site for substrate.

Belongs to the diaminopimelate epimerase family. Homodimer.

It is found in the cytoplasm. It catalyses the reaction (2S,6S)-2,6-diaminopimelate = meso-2,6-diaminopimelate. It functions in the pathway amino-acid biosynthesis; L-lysine biosynthesis via DAP pathway; DL-2,6-diaminopimelate from LL-2,6-diaminopimelate: step 1/1. Functionally, catalyzes the stereoinversion of LL-2,6-diaminopimelate (L,L-DAP) to meso-diaminopimelate (meso-DAP), a precursor of L-lysine and an essential component of the bacterial peptidoglycan. The chain is Diaminopimelate epimerase from Shewanella oneidensis (strain ATCC 700550 / JCM 31522 / CIP 106686 / LMG 19005 / NCIMB 14063 / MR-1).